A 206-amino-acid polypeptide reads, in one-letter code: Small ribosomal subunit protein uS4 (206 aa).

The disordered stretch occupies residues 28-48 (YMERRPYGPGEHGRARKKQDS). An S4 RNA-binding domain is found at 95 to 160 (MRLDALVLRA…MPPFQVAAAG (66 aa)).

The protein belongs to the universal ribosomal protein uS4 family. Part of the 30S ribosomal subunit. Contacts protein S5. The interaction surface between S4 and S5 is involved in control of translational fidelity.

In terms of biological role, one of the primary rRNA binding proteins, it binds directly to 16S rRNA where it nucleates assembly of the body of the 30S subunit. Functionally, with S5 and S12 plays an important role in translational accuracy. In Paenarthrobacter aurescens (strain TC1), this protein is Small ribosomal subunit protein uS4.